The primary structure comprises 101 residues: Protein SPIRAL1-like 3 (101 aa).

The segment covering 1–22 has biased composition (gly residues); the sequence is MGRGVSSGGGQSSLGYLFGGGE. 2 disordered regions span residues 1-54 and 73-101; these read MGRG…GIQS and TDRP…KDGK.

It belongs to the SPIRAL1 family.

Functionally, acts in maintaining the cortical microtubules organization essential for anisotropic cell growth. This chain is Protein SPIRAL1-like 3, found in Oryza sativa subsp. japonica (Rice).